The sequence spans 429 residues: 3-phosphoshikimate 1-carboxyvinyltransferase (429 aa).

Positions 22, 23, and 27 each coordinate 3-phosphoshikimate. Lys-22 is a binding site for phosphoenolpyruvate. Phosphoenolpyruvate is bound by residues Gly-94 and Arg-122. 4 residues coordinate 3-phosphoshikimate: Ser-167, Gln-169, Asp-315, and Lys-342. A phosphoenolpyruvate-binding site is contributed by Gln-169. Catalysis depends on Asp-315, which acts as the Proton acceptor. 2 residues coordinate phosphoenolpyruvate: Arg-346 and Arg-388.

It belongs to the EPSP synthase family. As to quaternary structure, monomer.

Its subcellular location is the cytoplasm. It catalyses the reaction 3-phosphoshikimate + phosphoenolpyruvate = 5-O-(1-carboxyvinyl)-3-phosphoshikimate + phosphate. It functions in the pathway metabolic intermediate biosynthesis; chorismate biosynthesis; chorismate from D-erythrose 4-phosphate and phosphoenolpyruvate: step 6/7. In terms of biological role, catalyzes the transfer of the enolpyruvyl moiety of phosphoenolpyruvate (PEP) to the 5-hydroxyl of shikimate-3-phosphate (S3P) to produce enolpyruvyl shikimate-3-phosphate and inorganic phosphate. The polypeptide is 3-phosphoshikimate 1-carboxyvinyltransferase (Geobacter sp. (strain M21)).